The following is a 182-amino-acid chain: Dynactin subunit 5 (182 aa).

M1 is subject to N-acetylmethionine.

This sequence belongs to the dynactin subunits 5/6 family. Dynactin subunit 5 subfamily. In terms of assembly, subunit of dynactin, a multiprotein complex part of a tripartite complex with dynein and a adapter, such as BICDL1, BICD2 or HOOK3. The dynactin complex is built around ACTR1A/ACTB filament and consists of an actin-related filament composed of a shoulder domain, a pointed end and a barbed end. Its length is defined by its flexible shoulder domain. The soulder is composed of 2 DCTN1 subunits, 4 DCTN2 and 2 DCTN3. The 4 DCNT2 (via N-terminus) bind the ACTR1A filament and act as molecular rulers to determine the length. The pointed end is important for binding dynein-dynactin cargo adapters. Consists of 4 subunits: ACTR10, DCNT4, DCTN5 and DCTN6. Within the complex DCTN6 forms a heterodimer with DCTN5. The barbed end is composed of a CAPZA1:CAPZB heterodimers, which binds ACTR1A/ACTB filament and dynactin and stabilizes dynactin. Interacts with N4BP2L1.

It localises to the cytoplasm. It is found in the cytoskeleton. Its subcellular location is the chromosome. The protein resides in the centromere. The protein localises to the kinetochore. Functionally, part of the dynactin complex that activates the molecular motor dynein for ultra-processive transport along microtubules. The sequence is that of Dynactin subunit 5 from Homo sapiens (Human).